The primary structure comprises 130 residues: Small ribosomal subunit protein uS9 (130 aa).

The protein belongs to the universal ribosomal protein uS9 family.

This is Small ribosomal subunit protein uS9 from Aromatoleum aromaticum (strain DSM 19018 / LMG 30748 / EbN1) (Azoarcus sp. (strain EbN1)).